Reading from the N-terminus, the 254-residue chain is Probable triosephosphate isomerase 2 (254 aa).

Residue 9-11 (NMK) coordinates substrate. The Electrophile role is filled by histidine 96. Glutamate 168 (proton acceptor) is an active-site residue. Residues glycine 174 and serine 212 each coordinate substrate.

The protein belongs to the triosephosphate isomerase family. Homodimer.

The protein resides in the cytoplasm. The catalysed reaction is D-glyceraldehyde 3-phosphate = dihydroxyacetone phosphate. It functions in the pathway carbohydrate biosynthesis; gluconeogenesis. It participates in carbohydrate degradation; glycolysis; D-glyceraldehyde 3-phosphate from glycerone phosphate: step 1/1. Its function is as follows. Involved in the gluconeogenesis. Catalyzes stereospecifically the conversion of dihydroxyacetone phosphate (DHAP) to D-glyceraldehyde-3-phosphate (G3P). The sequence is that of Probable triosephosphate isomerase 2 from Listeria monocytogenes serotype 4b (strain F2365).